Here is a 341-residue protein sequence, read N- to C-terminus: Ribulose-5-phosphate reductase 2 (341 aa).

Zn(2+) contacts are provided by Cys38, His64, Glu65, and Glu144.

This sequence belongs to the zinc-containing alcohol dehydrogenase family. As to quaternary structure, heterodimer together with TarI. It depends on Zn(2+) as a cofactor.

The catalysed reaction is D-ribitol 5-phosphate + NADP(+) = D-ribulose 5-phosphate + NADPH + H(+). It functions in the pathway cell wall biogenesis; poly(ribitol phosphate) teichoic acid biosynthesis. In terms of biological role, catalyzes the NADPH dependent reduction of D-ribulose 5-phosphate to D-ribitol 5-phosphate. The sequence is that of Ribulose-5-phosphate reductase 2 from Staphylococcus aureus (strain NCTC 8325 / PS 47).